The following is a 331-amino-acid chain: Probable staphylococcal-like nuclease CAN1 (331 aa).

Residue glycine 2 is the site of N-myristoyl glycine attachment. Cysteine 10 carries the S-palmitoyl cysteine lipid modification. A TNase-like domain is found at 136-313 (HTLPVDAKAV…QSGRKGLWAA (178 aa)). Aspartate 149 is a binding site for Ca(2+). Arginine 220 is an active-site residue. Aspartate 225 serves as a coordination point for Ca(2+). Catalysis depends on residues glutamate 228 and arginine 262. Positions 306–331 (GRKGLWAASRPQKPWEWRRDKRNGTA) are disordered. Positions 318–331 (KPWEWRRDKRNGTA) are enriched in basic and acidic residues.

Belongs to the thermonuclease family. It depends on Ca(2+) as a cofactor.

It localises to the cell membrane. Its function is as follows. Enzyme that catalyzes the hydrolysis of both DNA and RNA at the 5' position of the phosphodiester bond. This is Probable staphylococcal-like nuclease CAN1 from Oryza sativa subsp. japonica (Rice).